Reading from the N-terminus, the 318-residue chain is Pantothenate synthetase (318 aa).

Residue methionine 44–histidine 51 coordinates ATP. The Proton donor role is filled by histidine 51. Glutamine 75 contacts (R)-pantoate. Beta-alanine is bound at residue glutamine 75. An ATP-binding site is contributed by glycine 161 to aspartate 164. (R)-pantoate is bound at residue glutamine 167. Residues valine 190 and leucine 198–arginine 201 contribute to the ATP site. A disordered region spans residues aspartate 295–arginine 318.

This sequence belongs to the pantothenate synthetase family. Homodimer.

The protein localises to the cytoplasm. It catalyses the reaction (R)-pantoate + beta-alanine + ATP = (R)-pantothenate + AMP + diphosphate + H(+). Its pathway is cofactor biosynthesis; (R)-pantothenate biosynthesis; (R)-pantothenate from (R)-pantoate and beta-alanine: step 1/1. Functionally, catalyzes the condensation of pantoate with beta-alanine in an ATP-dependent reaction via a pantoyl-adenylate intermediate. The chain is Pantothenate synthetase from Nocardia farcinica (strain IFM 10152).